A 103-amino-acid polypeptide reads, in one-letter code: Protamine-2 (103 aa).

The segment at 1 to 103 (MVRYRMRSLS…RTRRRRCRRH (103 aa)) is disordered. Ser8 and Ser10 each carry phosphoserine. The span at 8–17 (SLSERPHEVH) shows a compositional bias: basic and acidic residues. Positions 18-29 (GQQVHGQDQGHN) are enriched in low complexity. Basic residues predominate over residues 48–103 (HRGHSHHRRRRCSRRRLHRIHRRRHRSCRRRRRRSCRHRRRHRRGCRTRRRRCRRH).

This sequence belongs to the protamine P2 family. In terms of assembly, interacts with TDRP. Post-translationally, proteolytic processing into mature chains is required for histone eviction during spermatogenesis. Transition proteins (TNP1 and TNP2) are required for processing. In terms of tissue distribution, testis.

Its subcellular location is the nucleus. It localises to the chromosome. In terms of biological role, protamines substitute for histones in the chromatin of sperm during the haploid phase of spermatogenesis. They compact sperm DNA into a highly condensed, stable and inactive complex. The sequence is that of Protamine-2 (PRM2) from Macaca nemestrina (Pig-tailed macaque).